The chain runs to 163 residues: NADH-quinone oxidoreductase subunit I (163 aa).

4Fe-4S ferredoxin-type domains are found at residues 53–83 (LRRY…IEAG) and 94–123 (VRYD…EGPN). 8 residues coordinate [4Fe-4S] cluster: Cys-63, Cys-66, Cys-69, Cys-73, Cys-103, Cys-106, Cys-109, and Cys-113.

This sequence belongs to the complex I 23 kDa subunit family. NDH-1 is composed of 14 different subunits. Subunits NuoA, H, J, K, L, M, N constitute the membrane sector of the complex. [4Fe-4S] cluster is required as a cofactor.

The protein localises to the cell inner membrane. It catalyses the reaction a quinone + NADH + 5 H(+)(in) = a quinol + NAD(+) + 4 H(+)(out). Functionally, NDH-1 shuttles electrons from NADH, via FMN and iron-sulfur (Fe-S) centers, to quinones in the respiratory chain. The immediate electron acceptor for the enzyme in this species is believed to be ubiquinone. Couples the redox reaction to proton translocation (for every two electrons transferred, four hydrogen ions are translocated across the cytoplasmic membrane), and thus conserves the redox energy in a proton gradient. This Brucella melitensis biotype 1 (strain ATCC 23456 / CCUG 17765 / NCTC 10094 / 16M) protein is NADH-quinone oxidoreductase subunit I.